The primary structure comprises 488 residues: UDP-N-acetylmuramate--L-alanine ligase (488 aa).

Residue 126 to 132 (GTHGKTT) participates in ATP binding.

The protein belongs to the MurCDEF family.

It is found in the cytoplasm. The catalysed reaction is UDP-N-acetyl-alpha-D-muramate + L-alanine + ATP = UDP-N-acetyl-alpha-D-muramoyl-L-alanine + ADP + phosphate + H(+). It participates in cell wall biogenesis; peptidoglycan biosynthesis. Cell wall formation. This is UDP-N-acetylmuramate--L-alanine ligase from Cronobacter sakazakii (strain ATCC BAA-894) (Enterobacter sakazakii).